The sequence spans 269 residues: Mediator of RNA polymerase II transcription subunit 8 (269 aa).

Residues 187-217 form a disordered region; it reads RVLEDDDEEDESDSEEGEGEADEMEVVGARR. A compositionally biased stretch (acidic residues) spans 190–211; sequence EDDDEEDESDSEEGEGEADEME.

The protein belongs to the Mediator complex subunit 8 family. As to quaternary structure, component of the Mediator complex.

The protein localises to the nucleus. Functionally, component of the Mediator complex, a coactivator involved in the regulated transcription of nearly all RNA polymerase II-dependent genes. Mediator functions as a bridge to convey information from gene-specific regulatory proteins to the basal RNA polymerase II transcription machinery. Mediator is recruited to promoters by direct interactions with regulatory proteins and serves as a scaffold for the assembly of a functional preinitiation complex with RNA polymerase II and the general transcription factors. The polypeptide is Mediator of RNA polymerase II transcription subunit 8 (med8) (Aspergillus niger (strain ATCC MYA-4892 / CBS 513.88 / FGSC A1513)).